Consider the following 476-residue polypeptide: Adenosylhomocysteinase (476 aa).

3 residues coordinate substrate: Thr67, Asp142, and Glu202. 203–205 provides a ligand contact to NAD(+); it reads TTT. Lys232 and Asp236 together coordinate substrate. NAD(+) is bound by residues Asn237, 266–271, Glu289, Asn324, 345–347, and Asn390; these read GYGDVG and IGH.

The protein belongs to the adenosylhomocysteinase family. Requires NAD(+) as cofactor.

It localises to the cytoplasm. The enzyme catalyses S-adenosyl-L-homocysteine + H2O = L-homocysteine + adenosine. It participates in amino-acid biosynthesis; L-homocysteine biosynthesis; L-homocysteine from S-adenosyl-L-homocysteine: step 1/1. Functionally, may play a key role in the regulation of the intracellular concentration of adenosylhomocysteine. This is Adenosylhomocysteinase from Prochlorococcus marinus (strain MIT 9303).